Consider the following 557-residue polypeptide: Glypican-1 (557 aa).

The signal sequence occupies residues 1–23 (MELRTRGWWLLCAAAALVVCARG). Intrachain disulfides connect cysteine 32-cysteine 68, cysteine 62-cysteine 255, cysteine 69-cysteine 258, cysteine 190-cysteine 342, cysteine 245-cysteine 278, cysteine 267-cysteine 414, and cysteine 271-cysteine 400. 2 N-linked (GlcNAc...) asparagine glycosylation sites follow: asparagine 79 and asparagine 116. The interval 477–531 (FQDASDDGSGSGSGGGCPDDTCGRRVSKKSSSSRTPLTHALPGLSEQEGQKTSAA) is disordered. O-linked (Xyl...) (heparan sulfate) serine glycosylation is found at serine 485, serine 487, and serine 489. Residue serine 529 is the site of GPI-anchor amidated serine attachment. Positions 530-557 (AATCPEPHSFFLLFLVTLVLAAARPRWR) are cleaved as a propeptide — removed in mature form.

It belongs to the glypican family. S-nitrosylated in a Cu(2+)-dependent manner. Nitric acid (NO) is released from the nitrosylated cysteines by ascorbate or by some other reducing agent, in a Cu(2+) or Zn(2+) dependent manner. This free nitric oxide is then capable of cleaving the heparan sulfate side chains. In terms of processing, N- and O-glycosylated. N-glycosylation is mainly of the complex type containing sialic acid. O-glycosylated with heparan sulfate. The heparan sulfate chains can be cleaved either by the action of heparanase or, degraded by a deaminative process that uses nitric oxide (NO) released from the S-nitrosylated cysteines. This process is triggered by ascorbate, or by some other reducing agent, in a Cu(2+)- or Zn(2+) dependent manner. Cu(2+) ions are provided by ceruloproteins such as APP, PRNP or CP which associate with GCP1 in intracellular compartments or lipid rafts. Post-translationally, this cell-associated glypican is further processed to give rise to a medium-released species.

The protein resides in the cell membrane. It localises to the endosome. The protein localises to the secreted. Its subcellular location is the extracellular space. Its function is as follows. Cell surface proteoglycan that bears heparan sulfate. Binds, via the heparan sulfate side chains, alpha-4 (V) collagen and participates in Schwann cell myelination. May act as a catalyst in increasing the rate of conversion of prion protein PRPN(C) to PRNP(Sc) via associating (via the heparan sulfate side chains) with both forms of PRPN, targeting them to lipid rafts and facilitating their interaction. Required for proper skeletal muscle differentiation by sequestering FGF2 in lipid rafts preventing its binding to receptors (FGFRs) and inhibiting the FGF-mediated signaling. Binds Cu(2+) or Zn(2+) ions. This chain is Glypican-1 (Gpc1), found in Mus musculus (Mouse).